The sequence spans 1302 residues: Ubiquitin conjugation factor E4 B (1302 aa).

N-acetylmethionine is present on methionine 1. A disordered region spans residues 1–155 (MEELSADEIR…EPSSGPEVSE (155 aa)). The segment covering 16–33 (RLAGGQTSQPTTPLTSPQ) has biased composition (low complexity). A phosphoserine mark is found at serine 23 and serine 31. A compositionally biased stretch (polar residues) spans 51-64 (QSLGLNVHNMTPAT). Over residues 76–99 (SQSSEGVSSLSSSPSNSLETQSQS) the composition is skewed to low complexity. A phosphoserine mark is found at serine 84, serine 88, serine 90, serine 101, serine 103, serine 105, and serine 124. Basic and acidic residues predominate over residues 134 to 147 (NDRREKRSLSDKEP). Phosphoserine is present on serine 238. Positions 299 to 327 (AASQLAVPSTPLSPHSAASGTAAGSQPSS) are enriched in polar residues. The disordered stretch occupies residues 299-406 (AASQLAVPST…SPSLGASGGA (108 aa)). Over residues 340–374 (ASSGVSILSSSPSPPALASSPQAVPASSSRQRPSS) the composition is skewed to low complexity. Phosphoserine is present on serine 383. Residues 384 to 400 (PSATSRRPSSLRISPSL) are compositionally biased toward low complexity. 2 positions are modified to phosphoserine: serine 803 and serine 969. Positions 1057 to 1077 (NKEQWDQLPRDQQQARQSQLA) are disordered. The span at 1066-1077 (RDQQQARQSQLA) shows a compositional bias: low complexity. The U-box domain maps to 1227-1300 (DAPDEFRDPL…QAWMREKQNS (74 aa)). At serine 1265 the chain carries Phosphoserine.

Belongs to the ubiquitin conjugation factor E4 family. Interacts with VCP/p97. Interacts with STUB1/CHIP and UNC45B. Proteolytically cleaved by caspases during apoptosis. Cleaved efficiently at Asp-123 by caspase-6 and granzyme B. Cleaved with approximately 10-fold less efficiency at Asp-109 by caspase-3 and caspase-7. As to expression, expressed in differentiated myotubes (at protein level). Highest expression in ovary, testis, heart and skeletal muscle. Expression is low in colon, thymus and peripheral blood leukocytes. Almost undetectable in lung and spleen.

It is found in the cytoplasm. It localises to the nucleus. It catalyses the reaction S-ubiquitinyl-[E2 ubiquitin-conjugating enzyme]-L-cysteine + [acceptor protein]-L-lysine = [E2 ubiquitin-conjugating enzyme]-L-cysteine + N(6)-ubiquitinyl-[acceptor protein]-L-lysine.. The protein operates within protein modification; protein ubiquitination. In terms of biological role, ubiquitin-protein ligase that probably functions as an E3 ligase in conjunction with specific E1 and E2 ligases. May also function as an E4 ligase mediating the assembly of polyubiquitin chains on substrates ubiquitinated by another E3 ubiquitin ligase. May regulate myosin assembly in striated muscles together with STUB1 and VCP/p97 by targeting myosin chaperone UNC45B for proteasomal degradation. This chain is Ubiquitin conjugation factor E4 B, found in Homo sapiens (Human).